Here is a 427-residue protein sequence, read N- to C-terminus: Glutamate-1-semialdehyde 2,1-aminomutase (427 aa).

An N6-(pyridoxal phosphate)lysine modification is found at lysine 265.

The protein belongs to the class-III pyridoxal-phosphate-dependent aminotransferase family. HemL subfamily. As to quaternary structure, homodimer. Pyridoxal 5'-phosphate serves as cofactor.

It is found in the cytoplasm. It catalyses the reaction (S)-4-amino-5-oxopentanoate = 5-aminolevulinate. Its pathway is porphyrin-containing compound metabolism; protoporphyrin-IX biosynthesis; 5-aminolevulinate from L-glutamyl-tRNA(Glu): step 2/2. The polypeptide is Glutamate-1-semialdehyde 2,1-aminomutase (Pseudomonas aeruginosa (strain LESB58)).